Consider the following 140-residue polypeptide: MRHGKAGRKLNRTASHRKAMFANMAASLITHEQIVTTLPKAKEIRPIVEKLVTLGKRGDLHARRQAISQIRDAAVVSKLFDTIATRYATRNGGYLRIMKAGFRQGDNAAMAVIEFVDRDTYAKGAADKARVAAEEQAVAA.

The protein belongs to the bacterial ribosomal protein bL17 family. Part of the 50S ribosomal subunit. Contacts protein L32.

The chain is Large ribosomal subunit protein bL17 from Rhizobium etli (strain ATCC 51251 / DSM 11541 / JCM 21823 / NBRC 15573 / CFN 42).